The chain runs to 185 residues: Elongation factor P (185 aa).

It belongs to the elongation factor P family.

It is found in the cytoplasm. Its pathway is protein biosynthesis; polypeptide chain elongation. Functionally, involved in peptide bond synthesis. Stimulates efficient translation and peptide-bond synthesis on native or reconstituted 70S ribosomes in vitro. Probably functions indirectly by altering the affinity of the ribosome for aminoacyl-tRNA, thus increasing their reactivity as acceptors for peptidyl transferase. The sequence is that of Elongation factor P from Syntrophomonas wolfei subsp. wolfei (strain DSM 2245B / Goettingen).